Consider the following 338-residue polypeptide: CRISPR system Cmr subunit Cmr1-1 (338 aa).

Belongs to the CRISPR system Cmr1 family. In terms of assembly, part of the type III-B Cmr ribonucleoprotein (RNP) complex, an elongated RNP with Cmr2 and Cmr3 as the base, with Cmr4 and Cmr5 forming a helical core along the mature crRNA (39 or 45 nt in length), while the complex is capped by Cmr6 and Cmr1. The 5' end of the crRNA is bound to Cmr2 and Cmr3, while Cmr6 and a Cmr1 subunit (Cmr1-1 or Cmr1-2) cap the 3' end of the crRNA. The target RNA lies antiparallel to the crRNA, with its 5' end near Cmr1 and Cmr6 and its 3' end near Cmr2 and Cmr3; major target cleavage occurs nears the junction of Cmr1/Cmr6 and Cmr4/Cmr, with minor cleavage occurring at 6 nt intervals which coincide with the proposed spacing of Cmr4 subunits.

It localises to the cytoplasm. Its function is as follows. CRISPR (clustered regularly interspaced short palindromic repeat), is an adaptive immune system that provides protection against mobile genetic elements (viruses, transposable elements and conjugative plasmids). CRISPR clusters contain sequences complementary to antecedent mobile elements and target invading nucleic acids. CRISPR clusters are transcribed and processed into CRISPR RNA (crRNA), formerly called psiRNA (prokaryotic silencing) in this organism. Part of the Cmr ribonucleoprotein complex which has divalent cation-dependent endoribonuclease activity specific for ssRNA complementary to the crRNA (target RNA), generating 5' hydroxy- and 3' phosphate or 2'-3' cyclic phosphate termini. Cmr4 is probably the subunit that cleaves target RNA. Cmr complex does not cleave ssDNA complementary to the crRNA. Cleavage of invading RNA is guided by the crRNA; substrate cleavage occurs a fixed distance (14 nt) from the 3' end of the crRNA. In vitro reconstitution shows Cmr1-2 and Cmr5 are not absolutely necessary for target cleavage. The polypeptide is CRISPR system Cmr subunit Cmr1-1 (Pyrococcus furiosus (strain ATCC 43587 / DSM 3638 / JCM 8422 / Vc1)).